The following is a 381-amino-acid chain: Protein COS6 (381 aa).

The Cytoplasmic segment spans residues 1 to 42; that stretch reads MKENELKNEKSVDVLSVKQLESQKTVLPQDLFRSSFTWFCYE. A helical membrane pass occupies residues 43–63; it reads IYKSLVFRIWMLLWLPLSVWW. Residues 64-69 lie on the Extracellular side of the membrane; that stretch reads KLSNNW. The chain crosses the membrane as a helical span at residues 70–90; sequence IYPLMVSLLVLFWGPVFVLVI. Residues 91 to 381 lie on the Cytoplasmic side of the membrane; that stretch reads FRLSRKRSLS…QLSCSEESLA (291 aa).

Belongs to the DUP/COS family.

It is found in the membrane. The sequence is that of Protein COS6 (COS6) from Saccharomyces cerevisiae (strain ATCC 204508 / S288c) (Baker's yeast).